The primary structure comprises 209 residues: Transmembrane emp24 domain-containing protein B (209 aa).

The first 24 residues, Met1–Ala24, serve as a signal peptide directing secretion. Residues Leu25–Arg174 are Lumenal-facing. The region spanning Gln34 to Ser119 is the GOLD domain. Residues Val175–Trp195 form a helical membrane-spanning segment. Residues Tyr196–Val209 lie on the Cytoplasmic side of the membrane.

Belongs to the EMP24/GP25L family.

Its subcellular location is the cytoplasmic vesicle membrane. Could have a role in the budding of coatomer-coated and other species of coated vesicles. The sequence is that of Transmembrane emp24 domain-containing protein B (empB) from Dictyostelium discoideum (Social amoeba).